We begin with the raw amino-acid sequence, 429 residues long: Histidine--tRNA ligase (429 aa).

Belongs to the class-II aminoacyl-tRNA synthetase family. In terms of assembly, homodimer.

The protein resides in the cytoplasm. The catalysed reaction is tRNA(His) + L-histidine + ATP = L-histidyl-tRNA(His) + AMP + diphosphate + H(+). This is Histidine--tRNA ligase from Pseudomonas aeruginosa (strain LESB58).